The chain runs to 1086 residues: Ribonuclease 3 (1086 aa).

Disordered stretches follow at residues 1-77 and 158-233; these read MSDE…DSPR and CHSM…LRNF. A compositionally biased stretch (basic residues) spans 13-23; sequence PKHKRARRKKY. The span at 24–35 shows a compositional bias: basic and acidic residues; it reads QKEYQERHKEEM. The span at 43 to 53 shows a compositional bias: polar residues; that stretch reads FQNQPSTSSAP. Basic residues predominate over residues 159–168; it reads HSMKGRKTPK. The segment covering 181 to 190 has biased composition (acidic residues); the sequence is VSDDSNDSQD. Positions 191–201 are enriched in polar residues; that stretch reads EASTSEPTNRQ. Over residues 203-217 the composition is skewed to basic and acidic residues; that stretch reads PEADKTGEVKDEKQT. 2 consecutive RNase III domains span residues 607 to 781 and 833 to 957; these read LDVF…LDGG and FHAL…VDRG. Residues Glu694, Asn767, Glu770, Glu873, Asp943, and Glu946 each contribute to the Mg(2+) site. Residues 984–1059 enclose the DRBM domain; it reads DAKSHLQQWC…AELALANLES (76 aa).

It belongs to the ribonuclease III family. Mg(2+) serves as cofactor. Mn(2+) is required as a cofactor.

It localises to the nucleus. It carries out the reaction Endonucleolytic cleavage to 5'-phosphomonoester.. In terms of biological role, executes the initial step of microRNA (miRNA) processing in the nucleus, that is the cleavage of pri-miRNA to release pre-miRNA. Involved in pre-rRNA processing. Cleaves double-strand RNA and does not cleave single-strand RNA. Involved in fertility. Required for the function or synthesis of the let-7 miRNA. The protein is Ribonuclease 3 (drsh-1) of Caenorhabditis elegans.